We begin with the raw amino-acid sequence, 676 residues long: Zinc finger protein 418 (676 aa).

Positions 5-91 (VAFEDVAVNF…HSCEMCGAIL (87 aa)) constitute a KRAB domain. 16 consecutive C2H2-type zinc fingers follow at residues 82-105 (HSCE…GTHH), 230-252 (CYCW…QRVH), 258-280 (YECG…QRVH), 286-308 (YECG…QRVH), 314-336 (YECG…QRVH), 342-364 (YECE…QRGH), 370-392 (YECE…HRVH), 398-420 (YECG…QRGH), 426-448 (YECG…QRSH), 454-476 (YECR…QRVH), 482-504 (YECN…QRVH), 510-532 (FECS…RRVH), 538-560 (YECG…QKTH), 591-613 (YECR…QRLH), 619-641 (YECS…RRVH), and 647-669 (YECS…QRVH).

The protein belongs to the krueppel C2H2-type zinc-finger protein family. As to expression, highly expressed in heart.

It is found in the nucleus. Its function is as follows. Transcriptional repressor. May play a role as regulator of the ubiquitin-proteasome system and autophagy-lysosomal pathway. The sequence is that of Zinc finger protein 418 (ZNF418) from Homo sapiens (Human).